The primary structure comprises 445 residues: Phosphoglucosamine mutase (445 aa).

The Phosphoserine intermediate role is filled by Ser-102. Residues Ser-102, Asp-241, Asp-243, and Asp-245 each coordinate Mg(2+). The residue at position 102 (Ser-102) is a Phosphoserine.

This sequence belongs to the phosphohexose mutase family. The cofactor is Mg(2+). In terms of processing, activated by phosphorylation.

The catalysed reaction is alpha-D-glucosamine 1-phosphate = D-glucosamine 6-phosphate. In terms of biological role, catalyzes the conversion of glucosamine-6-phosphate to glucosamine-1-phosphate. This chain is Phosphoglucosamine mutase, found in Escherichia coli O81 (strain ED1a).